We begin with the raw amino-acid sequence, 476 residues long: Mitochondrial-processing peptidase subunit beta (476 aa).

A mitochondrion-targeting transit peptide spans 1–28 (MASRRLALNLAQGVKARAGGVINPFRRG). Zn(2+) is bound at residue His84. The Proton acceptor role is filled by Glu87. Positions 88 and 164 each coordinate Zn(2+).

The protein belongs to the peptidase M16 family. In terms of assembly, heterodimer of mpp (alpha) and pep (beta) subunits, forming the mitochondrial processing protease (MPP) in which mpp is involved in substrate recognition and binding and pep is the catalytic subunit. Component of the ubiquinol-cytochrome c oxidoreductase (cytochrome b-c1 complex, complex III, CIII), a multisubunit enzyme composed of 10 subunits. The complex is composed of 3 respiratory subunits cytochrome b (cob), cytochrome c1 (cyt-1) and Rieske protein (fes-1), 2 core protein subunits pep and ucr-1, and 5 low-molecular weight protein subunits qcr6, qcr7, qcr8, qcr9 and probably NCU16844/qcr10. The complex exists as an obligatory dimer and forms supercomplexes (SCs) in the inner mitochondrial membrane with NADH-ubiquinone oxidoreductase (complex I, CI) and cytochrome c oxidase (complex IV, CIV), resulting in different assemblies (supercomplexes SCI(1)III(2), SCIII(2)IV(1) and SCIII(2)IV(2) as well as higher order I(x)III(y)IV(z) megacomplexes). It depends on Zn(2+) as a cofactor.

The protein resides in the mitochondrion matrix. The protein localises to the mitochondrion inner membrane. It catalyses the reaction Release of N-terminal transit peptides from precursor proteins imported into the mitochondrion, typically with Arg in position P2.. Binding to mpp is required for catalytic activity. Inhibited by metal chelator ethylenediaminetetraacetic acid (EDTA). Catalytic subunit of the essential mitochondrial processing protease (MPP), which cleaves the mitochondrial sequence off newly imported precursors proteins. Preferentially, cleaves after an arginine at position P2. Its function is as follows. Component of the ubiquinol-cytochrome c oxidoreductase, a multisubunit transmembrane complex that is part of the mitochondrial electron transport chain which drives oxidative phosphorylation. The respiratory chain contains 3 multisubunit complexes succinate dehydrogenase (complex II, CII), ubiquinol-cytochrome c oxidoreductase (cytochrome b-c1 complex, complex III, CIII) and cytochrome c oxidase (complex IV, CIV), that cooperate to transfer electrons derived from NADH and succinate to molecular oxygen, creating an electrochemical gradient over the inner membrane that drives transmembrane transport and the ATP synthase. The cytochrome b-c1 complex catalyzes electron transfer from ubiquinol to cytochrome c, linking this redox reaction to translocation of protons across the mitochondrial inner membrane, with protons being carried across the membrane as hydrogens on the quinol. In the process called Q cycle, 2 protons are consumed from the matrix, 4 protons are released into the intermembrane space and 2 electrons are passed to cytochrome c. This is Mitochondrial-processing peptidase subunit beta from Neurospora crassa (strain ATCC 24698 / 74-OR23-1A / CBS 708.71 / DSM 1257 / FGSC 987).